The sequence spans 148 residues: Cysteine-rich venom protein VAR6 (148 aa).

Residues 1-22 (MILLKLYLTLAAILCQSRGTTS) form the signal peptide. An SCP domain is found at 41 to 140 (NKHNDLRRTV…AGVMVGHYTQ (100 aa)).

Belongs to the CRISP family. Contains 8 disulfide bonds. As to expression, expressed by the venom gland.

It localises to the secreted. Functionally, blocks ryanodine receptors, and potassium channels. The polypeptide is Cysteine-rich venom protein VAR6 (Varanus acanthurus (Ridge-tailed monitor)).